The chain runs to 238 residues: Orotidine 5'-phosphate decarboxylase (238 aa).

Residues Asp11, Lys32, 59-68, Thr123, Arg185, Gln194, Gly214, and Arg215 each bind substrate; that span reads DLKFHDIPNT. Residue Lys61 is the Proton donor of the active site.

The protein belongs to the OMP decarboxylase family. Type 1 subfamily. In terms of assembly, homodimer.

It carries out the reaction orotidine 5'-phosphate + H(+) = UMP + CO2. Its pathway is pyrimidine metabolism; UMP biosynthesis via de novo pathway; UMP from orotate: step 2/2. Functionally, catalyzes the decarboxylation of orotidine 5'-monophosphate (OMP) to uridine 5'-monophosphate (UMP). In Nostoc sp. (strain PCC 7120 / SAG 25.82 / UTEX 2576), this protein is Orotidine 5'-phosphate decarboxylase.